We begin with the raw amino-acid sequence, 358 residues long: Nicotinate-nucleotide--dimethylbenzimidazole phosphoribosyltransferase (358 aa).

The active-site Proton acceptor is the E314.

Belongs to the CobT family.

It carries out the reaction 5,6-dimethylbenzimidazole + nicotinate beta-D-ribonucleotide = alpha-ribazole 5'-phosphate + nicotinate + H(+). The protein operates within nucleoside biosynthesis; alpha-ribazole biosynthesis; alpha-ribazole from 5,6-dimethylbenzimidazole: step 1/2. In terms of biological role, catalyzes the synthesis of alpha-ribazole-5'-phosphate from nicotinate mononucleotide (NAMN) and 5,6-dimethylbenzimidazole (DMB). The sequence is that of Nicotinate-nucleotide--dimethylbenzimidazole phosphoribosyltransferase from Mycobacterium ulcerans (strain Agy99).